We begin with the raw amino-acid sequence, 91 residues long: Small ribosomal subunit protein uS15 (91 aa).

The protein belongs to the universal ribosomal protein uS15 family. In terms of assembly, part of the 30S ribosomal subunit. Forms a bridge to the 50S subunit in the 70S ribosome, contacting the 23S rRNA.

In terms of biological role, one of the primary rRNA binding proteins, it binds directly to 16S rRNA where it helps nucleate assembly of the platform of the 30S subunit by binding and bridging several RNA helices of the 16S rRNA. Functionally, forms an intersubunit bridge (bridge B4) with the 23S rRNA of the 50S subunit in the ribosome. The protein is Small ribosomal subunit protein uS15 of Hydrogenobaculum sp. (strain Y04AAS1).